The sequence spans 704 residues: Elongation factor G (704 aa).

Residues 8-291 enclose the tr-type G domain; it reads ANVRNIGIMA…AVIEYLPSPV (284 aa). Residues 17-24, 90-94, and 144-147 contribute to the GTP site; these read AHIDAGKT, DTPGH, and NKMD.

Belongs to the TRAFAC class translation factor GTPase superfamily. Classic translation factor GTPase family. EF-G/EF-2 subfamily.

The protein localises to the cytoplasm. Its function is as follows. Catalyzes the GTP-dependent ribosomal translocation step during translation elongation. During this step, the ribosome changes from the pre-translocational (PRE) to the post-translocational (POST) state as the newly formed A-site-bound peptidyl-tRNA and P-site-bound deacylated tRNA move to the P and E sites, respectively. Catalyzes the coordinated movement of the two tRNA molecules, the mRNA and conformational changes in the ribosome. This is Elongation factor G from Chlorobium phaeobacteroides (strain BS1).